Consider the following 202-residue polypeptide: Inner membrane-spanning protein YciB (202 aa).

Transmembrane regions (helical) follow at residues 3–23, 46–66, 73–93, 100–120, 145–165, and 173–193; these read ILFD…AGGN, ILLA…WVWM, TMLW…LFFH, WKPT…AVIF, LAWA…AYNF, and FKLF…GFYL.

It belongs to the YciB family.

It localises to the cell inner membrane. Its function is as follows. Plays a role in cell envelope biogenesis, maintenance of cell envelope integrity and membrane homeostasis. The chain is Inner membrane-spanning protein YciB from Aromatoleum aromaticum (strain DSM 19018 / LMG 30748 / EbN1) (Azoarcus sp. (strain EbN1)).